We begin with the raw amino-acid sequence, 789 residues long: Tax1-binding protein 1 (789 aa).

Phosphoserine is present on residues Ser-124, Ser-138, and Ser-225. Positions 144 to 599 (TTKAGLLELK…LKRSLENPAE (456 aa)) form a coiled coil. An oligomerization region spans residues 320 to 420 (EEIGRLQLCL…ELKLNAMKKD (101 aa)). A compositionally biased stretch (polar residues) spans 481–502 (TGNQQKVNDASVNTDPATSAST). The disordered stretch occupies residues 481–508 (TGNQQKVNDASVNTDPATSASTVDVKPS). A Phosphoserine; by IKKA modification is found at Ser-593. A Phosphoserine modification is found at Ser-609. A disordered region spans residues 639–660 (YASQETRDGADGAFYPDEIQRP). Ser-666 bears the Phosphoserine; by IKKA mark. Residues 678 to 712 (PARNFSRPDGLEDSEDSKEDENVPTAPDPPSQHLR) form a disordered region. 2 consecutive UBZ1-type zinc fingers follow at residues 727 to 753 (HKKC…VESH) and 754 to 780 (WKVC…VQTH). Positions 730, 733, 749, 753, 757, 760, 776, and 780 each coordinate Zn(2+).

In terms of assembly, homooligomer. Interacts with TNFAIP3. Interacts with STARD13. Interacts with MYO6. Interacts with TOM1; the interaction is indirect and is mediated by MYO6, which acts as a bridge between TOM1 and TAX1BP1. Interacts with MAVS; this interaction induces MAVS polyubiquitination. Interacts with TNIP1. Interacts with TRAF6; this interaction mediates deubiquitination of TRAF6 and inhibition of NF-kappa-B activation. Interacts with RIPK1; this interaction negatively regulates RIPK1 ubiquitination. Interacts with NBR1. Interacts with TBK1. Interacts with RB1CC1. Interacts with SQSTM1. Interacts with AZI2. Interacts with TICAM1 and TRIM32; these interactions target TICAM1 to TAX1BP1-mediated selective autophagic degradation. (Microbial infection) Interacts with the HTLV-1 protein Tax. As to quaternary structure, (Microbial infection) Interacts with Respiratory syncytial virus protein N; this interaction may promote viral growth by inhibiting the innate immune response. In terms of assembly, (Microbial infection) Interacts with Lassa virus protein Z. (Microbial infection) Interacts with Mopeia virus protein Z. Post-translationally, phosphorylated in the C-terminal region by CHUK/IKKA leading to NF-kappa-B signaling down-regulation. Expressed in all tissues tested.

The protein localises to the cytoplasm. Its subcellular location is the mitochondrion. The protein resides in the preautophagosomal structure. It is found in the cytoplasmic vesicle. It localises to the autophagosome. In terms of biological role, ubiquitin-binding adapter that participates in inflammatory, antiviral and innate immune processes as well as selective autophagy regulation. Plays a key role in the negative regulation of NF-kappa-B and IRF3 signalings by acting as an adapter for the ubiquitin-editing enzyme A20/TNFAIP3 to bind and inactivate its substrates. Disrupts the interactions between the E3 ubiquitin ligase TRAF3 and TBK1/IKBKE to attenuate 'Lys63'-linked polyubiquitination of TBK1 and thereby IFN-beta production. Also recruits A20/TNFAIP3 to ubiquitinated signaling proteins TRAF6 and RIPK1, leading to their deubiquitination and disruption of IL-1 and TNF-induced NF-kappa-B signaling pathways. Inhibits virus-induced apoptosis by inducing the 'Lys-48'-linked polyubiquitination and degradation of MAVS via recruitment of the E3 ligase ITCH, thereby attenuating MAVS-mediated apoptosis signaling. As a macroautophagy/autophagy receptor, facilitates the xenophagic clearance of pathogenic bacteria such as Salmonella typhimurium and Mycobacterium tuberculosis. Upon NBR1 recruitment to the SQSTM1-ubiquitin condensates, acts as the major recruiter of RB1CC1 to these ubiquitin condensates to promote their autophagic degradation. Mediates the autophagic degradation of other substrates including TICAM1. This Homo sapiens (Human) protein is Tax1-binding protein 1 (TAX1BP1).